Consider the following 216-residue polypeptide: Vacuolar iron transporter homolog 4 (216 aa).

The tract at residues 1–29 is disordered; the sequence is MAATNGDAELTVAEEAKEEEEATDDGGGG. The Cytoplasmic segment spans residues 1–36; sequence MAATNGDAELTVAEEAKEEEEATDDGGGGVSSQWLR. The helical transmembrane segment at 37-57 threads the bilayer; that stretch reads AAVLGASDGLVSTAALMLGIG. Residues 58-65 lie on the Vacuolar side of the membrane; that stretch reads AARPADAR. The chain crosses the membrane as a helical span at residues 66–86; it reads AVLLSGLAGLVAGACSMAIGE. Residues 87-134 lie on the Cytoplasmic side of the membrane; the sequence is YVSVHVQLDVELADLERRRRRGGPAPAGLGLHAAAAAVSRPGQAAAAS. The helical transmembrane segment at 135–155 threads the bilayer; sequence ALSFAAGAALPLLAAWFVAGA. The Vacuolar segment spans residues 156–157; the sequence is YR. Residues 158-178 form a helical membrane-spanning segment; it reads VRVVVVVATASLALAAFGAAG. Residues 179–190 lie on the Cytoplasmic side of the membrane; the sequence is ARLGRAPGGRAG. The helical transmembrane segment at 191–211 threads the bilayer; it reads LRVVVGGLLAMAATYGVMKLF. At 212–216 the chain is on the vacuolar side; the sequence is RTHGV.

Belongs to the CCC1 family.

It is found in the vacuole membrane. The enzyme catalyses Fe(2+)(in) = Fe(2+)(out). In terms of biological role, probable vacuolar iron transporter that may be involved in the regulation of iron distribution throughout the plant. The protein is Vacuolar iron transporter homolog 4 of Oryza sativa subsp. japonica (Rice).